A 46-amino-acid chain; its full sequence is Toxin Up-1 (46 aa).

The protein localises to the secreted. The protein resides in the nematocyst. Its subcellular location is the target cell membrane. Its function is as follows. This toxin is a potent hemolysin devoid of enzymatic activity. Its hemolytic activity is inhibited by sphingomyelin but not by cholesterol. In erythrocyte membranes, it causes numerous cell membrane ruptures. It also exerces cytotoxicity to different cell lines. It exerces a positive inotropic effect. Also causes hemorrhage and necrosis by dilation of the blood vessels in the skin, and vascular leakage of fluids and rupture of alveolar walls of the lungs. Is a potent ichtyotoxin. May act as a pore-forming toxin. The polypeptide is Toxin Up-1 (Urticina piscivora (Fish-eating sea anemone)).